We begin with the raw amino-acid sequence, 741 residues long: Phage T7 exclusion protein (741 aa).

The region spanning 27-334 (FGNIAENISR…NSLIFLYPGM (308 aa)) is the KAP NTPase domain.

Responsible for the exclusion of phage T7 by plasmid F. Growth of bacteriophage T7 is inhibited in cells of E.coli that carries the plasmid F. This Escherichia coli (strain K12) protein is Phage T7 exclusion protein (pifA).